We begin with the raw amino-acid sequence, 257 residues long: MSSAPNGRKKRPSRSTRSSIFQISKPPLQSGDWERRGSGSESAHKTQRALDDCKMLVQEFNTQVALYRELVISIGDVSVSCPSLRAEMHKTRTKGCEMARQAHQKLAAISGPEDGEIHPEICRLYIQLQCCLEMYTTEMLKSICLLGSLQFHRKGKEPGGGTKSLDCKIEESAETPALEDSSSSPVDSQQHSWQVSTDIENTERDMREMKNLLSKLRETMPLPLKNQDDSSLLNLTPYPLVRRRKRRFFGLCCLISS.

Disordered stretches follow at residues 1-45 (MSSA…SAHK) and 174-196 (ETPA…WQVS). Basic and acidic residues predominate over residues 32–45 (DWERRGSGSESAHK). Low complexity predominate over residues 180–192 (DSSSSPVDSQQHS). A Nuclear localization signal motif is present at residues 242 to 247 (RRRKRR). S-palmitoyl cysteine attachment occurs at residues C252 and C253.

It belongs to the RGS7BP/RGS9BP family. Interacts with 'R7' family proteins RGS6, RGS7, RGS9 and RGS11. Component of some R7-Gbeta5 complex composed of some R7 protein (RGS6, RGS7, RGS9 or RGS11), Gbeta5 (GNB5) and RGS7BP. In terms of processing, palmitoylated. Undergoes rapid palmitoylation turnover. De novo and turnover palmitoylation are both mediated by ZDHHC2. Palmitoylation regulates the cell membrane and nuclear shuttling and the regulation of GPCR signaling. Upon depalmitoylation, it is targeted from the plasma membrane into the nucleus. GPCR signaling inhibits depalmitoylation and promotes localization to the plasma membrane.

The protein localises to the nucleus. The protein resides in the cytoplasm. Its subcellular location is the cell membrane. Regulator of G protein-coupled receptor (GPCR) signaling. Regulatory subunit of the R7-Gbeta5 complexes that acts by controlling the subcellular location of the R7-Gbeta5 complexes. When palmitoylated, it targets the R7-Gbeta5 complexes to the plasma membrane, leading to inhibit G protein alpha subunits. When it is unpalmitoylated, the R7-Gbeta5 complexes undergo a nuclear/cytoplasmic shuttling. May also act by controlling the proteolytic stability of R7 proteins, probably by protecting them from degradation. The polypeptide is Regulator of G-protein signaling 7-binding protein (RGS7BP) (Homo sapiens (Human)).